The sequence spans 469 residues: MANYFKAAVKPKTSNQRLTVTVDKLDMNGVGVARWQNKPIFIAGVLPDEIVDVKVIEQKSKYARAKLISIDKQSASRVIPQCQHFGLCGGCDLQMLALEEQLLFKQQKITDLFSRSFSTQNITPEINTAHLPWQAAIKSSPWHYRRKARIGVQFDKNAQATIGFRQKSTNQLAAIKSCPVLVEPLSAIFPLLKKLLAQLTVKSAIGHIEVIQADISDTSSADKIQKDNQVVVVVRQLKPMNDTDIGLWQLYAQRHCWHVIIDDGNKQLPLADIKGGDSFELSYELTDTSKVYFSSNDFIQINHQVNNAMISQALAWLNILATDNVLDLFCGLGNFSLALAKHAKRVVGVEGMQTMVDKATQNSLVNGLDNCQFYQADLNSHWLLEPWVQGQVFDKVLLDPARAGAEQAVSQIAELKIPCVLYVSCDPATLARDSAILVSKGYKLEKISLMDMFSQTKHVETMILFTHTS.

In terms of domain architecture, TRAM spans proline 11–serine 69. [4Fe-4S] cluster contacts are provided by cysteine 82, cysteine 88, cysteine 91, and cysteine 178. Residues glutamine 300, phenylalanine 329, asparagine 334, glutamate 350, aspartate 377, and aspartate 399 each contribute to the S-adenosyl-L-methionine site. The active-site Nucleophile is cysteine 425.

The protein belongs to the class I-like SAM-binding methyltransferase superfamily. RNA M5U methyltransferase family. RlmD subfamily.

It catalyses the reaction uridine(1939) in 23S rRNA + S-adenosyl-L-methionine = 5-methyluridine(1939) in 23S rRNA + S-adenosyl-L-homocysteine + H(+). In terms of biological role, catalyzes the formation of 5-methyl-uridine at position 1939 (m5U1939) in 23S rRNA. This is 23S rRNA (uracil(1939)-C(5))-methyltransferase RlmD from Colwellia psychrerythraea (strain 34H / ATCC BAA-681) (Vibrio psychroerythus).